The sequence spans 530 residues: ATP synthase subunit alpha (530 aa).

172 to 179 contributes to the ATP binding site; it reads GDRQTGKT.

This sequence belongs to the ATPase alpha/beta chains family. F-type ATPases have 2 components, CF(1) - the catalytic core - and CF(0) - the membrane proton channel. CF(1) has five subunits: alpha(3), beta(3), gamma(1), delta(1), epsilon(1). CF(0) has three main subunits: a(1), b(2) and c(9-12). The alpha and beta chains form an alternating ring which encloses part of the gamma chain. CF(1) is attached to CF(0) by a central stalk formed by the gamma and epsilon chains, while a peripheral stalk is formed by the delta and b chains.

Its subcellular location is the cell inner membrane. The enzyme catalyses ATP + H2O + 4 H(+)(in) = ADP + phosphate + 5 H(+)(out). In terms of biological role, produces ATP from ADP in the presence of a proton gradient across the membrane. The alpha chain is a regulatory subunit. This Phocaeicola vulgatus (strain ATCC 8482 / DSM 1447 / JCM 5826 / CCUG 4940 / NBRC 14291 / NCTC 11154) (Bacteroides vulgatus) protein is ATP synthase subunit alpha.